The following is a 477-amino-acid chain: Glutamate--tRNA ligase 2 (477 aa).

The 'HIGH' region motif lies at 12–22 (PSPTGRMHLGN). Cysteine 109, cysteine 111, cysteine 136, and histidine 138 together coordinate Zn(2+). Residues 253–257 (PLSKR) carry the 'KMSKS' region motif. Lysine 256 provides a ligand contact to ATP.

This sequence belongs to the class-I aminoacyl-tRNA synthetase family. Glutamate--tRNA ligase type 1 subfamily. Monomer. The cofactor is Zn(2+).

It localises to the cytoplasm. It catalyses the reaction tRNA(Glu) + L-glutamate + ATP = L-glutamyl-tRNA(Glu) + AMP + diphosphate. Catalyzes the attachment of glutamate to tRNA(Glu) in a two-step reaction: glutamate is first activated by ATP to form Glu-AMP and then transferred to the acceptor end of tRNA(Glu). The chain is Glutamate--tRNA ligase 2 from Alkalilimnicola ehrlichii (strain ATCC BAA-1101 / DSM 17681 / MLHE-1).